A 765-amino-acid polypeptide reads, in one-letter code: Proton-coupled zinc antiporter SLC30A5 (765 aa).

Met-1 carries the N-acetylmethionine modification. Over 1–32 (MEEKYGGDVLAGPGGGGGLGPVDVPSARLTKY) the chain is Cytoplasmic. The helical transmembrane segment at 33-53 (IVLLCFTKFLKAVGLFESYDL) threads the bilayer. Residues 54 to 56 (LKA) are Lumenal-facing. The helical transmembrane segment at 57-77 (VHIVQFIFILKLGTAFFMVLF) threads the bilayer. Residues 78–98 (QKPFSSGKTITKHQWIKIFKH) lie on the Cytoplasmic side of the membrane. The chain crosses the membrane as a helical span at residues 99–119 (AVAGCIISLLWFFGLTLCGPL). Position 120 (Arg-120) is a topological domain, lumenal. The helical transmembrane segment at 121-141 (TLLLFEHSDIVVISLLSVLFT) threads the bilayer. At 142 to 152 (SSGGGPAKTRG) the chain is on the cytoplasmic side. The chain crosses the membrane as a helical span at residues 153 to 173 (AAFFIIAVICLLLFDNDDLMA). Over 174–193 (KMAEHPEGHHDSALTHMLYT) the chain is Lumenal. The chain crosses the membrane as a helical span at residues 194–214 (AIAFLGVADHKGGVLLLVLAL). Residues 215–238 (CCKVGFHTASRKLSVDVGGAKRLQ) are Cytoplasmic-facing. The helical transmembrane segment at 239 to 259 (ALSHLVSVLLLCPWVIVLSVT) threads the bilayer. At 260 to 267 (TESKVESW) the chain is on the lumenal side. A helical membrane pass occupies residues 268-288 (FSLIMPFATVIFFVMILDFYV). Topologically, residues 289–303 (DSICSVKMEVSKCAR) are cytoplasmic. The chain crosses the membrane as a helical span at residues 304–324 (YGSFPIFISALLFGNFWTHPI). At 325-342 (TDQLRAMNKAAHQESTEH) the chain is on the lumenal side. Residues 343-363 (VLSGGVVVSAIFFILSANILS) traverse the membrane as a helical segment. The Cytoplasmic segment spans residues 364-418 (SPSKRGQKGTLIGYSPEGTPLYNFMGDAFQHSSQSIPRFIKESLKQILEESDSRQ). The chain crosses the membrane as a helical span at residues 419-439 (IFYFLCLNLLFTFVELFYGVL). The tract at residues 420 to 640 (FYFLCLNLLF…ILIFLSVVPL (221 aa)) is mediates homodimerization with SLC30A6. Over 440–448 (TNSLGLISD) the chain is Lumenal. A helical membrane pass occupies residues 449–469 (GFHMLFDCSALVMGLFAALMS). His-451 and Asp-455 together coordinate Zn(2+). Residues 470-483 (RWKATRIFSYGYGR) lie on the Cytoplasmic side of the membrane. Residues 484-504 (IEILSGFINGLFLIVIAFFVF) traverse the membrane as a helical segment. Residues 505-520 (MESVARLIDPPELDTH) are Lumenal-facing. The helical transmembrane segment at 521-541 (MLTPVSVGGLIVNLIGICAFS) threads the bilayer. The his-rich loop; required for zinc transport stretch occupies residues 542–578 (HAHSHAHGASQGSCHSSDHSHSHHMHGHSDHGHGHSH). Over 542–592 (HAHSHAHGASQGSCHSSDHSHSHHMHGHSDHGHGHSHGSAGGGMNANMRGV) the chain is Cytoplasmic. The disordered stretch occupies residues 551 to 581 (SQGSCHSSDHSHSHHMHGHSDHGHGHSHGSA). A helical transmembrane segment spans residues 593-613 (FLHVLADTLGSIGVIVSTVLI). 2 residues coordinate Zn(2+): His-595 and Asp-599. The Lumenal segment spans residues 614 to 617 (EQFG). Residues 618 to 638 (WFIADPLCSLFIAILIFLSVV) traverse the membrane as a helical segment. At 639 to 765 (PLIKDACQVL…KYCKDGTYIM (127 aa)) the chain is on the cytoplasmic side.

This sequence belongs to the cation diffusion facilitator (CDF) transporter (TC 2.A.4) family. SLC30A subfamily. Heterodimer with SLC30A6/ZNT6; form a functional zinc ion transmembrane transporter. Post-translationally, could homodimerize through the formation of dityrosine bonds upon oxidative stress. Ubiquitously expressed. Highly expressed in pancreas, liver and kidney. Expressed abundantly in insulin-containing beta cells, undetectable in other endocrine cell types including glucagon-secreting alpha cells and most acinar cells (at protein level).

It localises to the golgi apparatus. The protein localises to the golgi stack membrane. It is found in the cytoplasmic vesicle. The protein resides in the COPII-coated vesicle membrane. Its subcellular location is the secretory vesicle membrane. It localises to the trans-Golgi network membrane. The protein localises to the endoplasmic reticulum membrane. It is found in the cell membrane. The protein resides in the apical cell membrane. The enzyme catalyses Zn(2+)(in) + 2 H(+)(out) = Zn(2+)(out) + 2 H(+)(in). Together with SLC30A6 forms a functional proton-coupled zinc ion antiporter mediating zinc entry into the lumen of organelles along the secretory pathway. By contributing to zinc ion homeostasis within the early secretory pathway, regulates the activation and folding of enzymes like alkaline phosphatases and enzymes involved in phosphatidylinositol glycan anchor biosynthesis. Through the transport of zinc into secretory granules of pancreatic beta-cells, plays an important role in the storage and secretion of insulin. Functionally, zinc ion:proton antiporter mediating influx and efflux of zinc at the plasma membrane. This Homo sapiens (Human) protein is Proton-coupled zinc antiporter SLC30A5.